Consider the following 131-residue polypeptide: NADPH-dependent 7-cyano-7-deazaguanine reductase (131 aa).

Catalysis depends on C41, which acts as the Thioimide intermediate. The active-site Proton donor is D48. Substrate contacts are provided by residues 63 to 65 and 82 to 83; these read VEL and HE.

Belongs to the GTP cyclohydrolase I family. QueF type 1 subfamily.

The protein resides in the cytoplasm. It carries out the reaction 7-aminomethyl-7-carbaguanine + 2 NADP(+) = 7-cyano-7-deazaguanine + 2 NADPH + 3 H(+). It participates in tRNA modification; tRNA-queuosine biosynthesis. Its function is as follows. Catalyzes the NADPH-dependent reduction of 7-cyano-7-deazaguanine (preQ0) to 7-aminomethyl-7-deazaguanine (preQ1). This Nitratiruptor sp. (strain SB155-2) protein is NADPH-dependent 7-cyano-7-deazaguanine reductase.